The primary structure comprises 319 residues: MTYARIQGVGSYIPQQILSNADLEKMVNTTDEWIMQRVGVRERHVIANSPDNTTTMAVDAAKRAIEMAGIDPAVIDMIIVGTATAEYYFPSTACLVQKHLNLREDIPAFDINAACAGFVYALSIADQYIRNEGAKHILVIGVDSLTKVVDWKDRSTCILFGDGAGAVILQAHKEPGILNTILHANGDYSDLITAKSGVWERESVPHLHMYGKEVFKLAVTKLGEIVDEIIEKSGLKQSDIDWLIPHQANLRIIEATAKRLGLPRERVILTIEQHGNTSAASIPLALDAAVRAGKIKRGDTLLLEAFGAGLAWGAALLKL.

Catalysis depends on residues Cys-115 and His-246. An ACP-binding region spans residues 247–251; it reads QANLR. Residue Asn-276 is part of the active site.

It belongs to the thiolase-like superfamily. FabH family. In terms of assembly, homodimer.

The protein localises to the cytoplasm. It carries out the reaction malonyl-[ACP] + acetyl-CoA + H(+) = 3-oxobutanoyl-[ACP] + CO2 + CoA. It functions in the pathway lipid metabolism; fatty acid biosynthesis. Functionally, catalyzes the condensation reaction of fatty acid synthesis by the addition to an acyl acceptor of two carbons from malonyl-ACP. Catalyzes the first condensation reaction which initiates fatty acid synthesis and may therefore play a role in governing the total rate of fatty acid production. Possesses both acetoacetyl-ACP synthase and acetyl transacylase activities. Its substrate specificity determines the biosynthesis of branched-chain and/or straight-chain of fatty acids. This Coxiella burnetii (strain RSA 493 / Nine Mile phase I) protein is Beta-ketoacyl-[acyl-carrier-protein] synthase III.